The following is a 162-amino-acid chain: NADH-quinone oxidoreductase subunit I (162 aa).

4Fe-4S ferredoxin-type domains lie at 52–82 and 93–122; these read LRRY…IEAG and VRYD…EGPN. The [4Fe-4S] cluster site is built by cysteine 62, cysteine 65, cysteine 68, cysteine 72, cysteine 102, cysteine 105, cysteine 108, and cysteine 112.

The protein belongs to the complex I 23 kDa subunit family. In terms of assembly, NDH-1 is composed of 14 different subunits. Subunits NuoA, H, J, K, L, M, N constitute the membrane sector of the complex. [4Fe-4S] cluster serves as cofactor.

It localises to the cell inner membrane. It catalyses the reaction a quinone + NADH + 5 H(+)(in) = a quinol + NAD(+) + 4 H(+)(out). In terms of biological role, NDH-1 shuttles electrons from NADH, via FMN and iron-sulfur (Fe-S) centers, to quinones in the respiratory chain. The immediate electron acceptor for the enzyme in this species is believed to be ubiquinone. Couples the redox reaction to proton translocation (for every two electrons transferred, four hydrogen ions are translocated across the cytoplasmic membrane), and thus conserves the redox energy in a proton gradient. This Nitrobacter winogradskyi (strain ATCC 25391 / DSM 10237 / CIP 104748 / NCIMB 11846 / Nb-255) protein is NADH-quinone oxidoreductase subunit I.